Reading from the N-terminus, the 1336-residue chain is Aldehyde oxidase 4 (1336 aa).

A 2Fe-2S ferredoxin-type domain is found at 8 to 95 (DELIFFVNGK…GAAITTVEGV (88 aa)). Residues cysteine 47, cysteine 52, cysteine 55, and cysteine 77 each coordinate [2Fe-2S] cluster. Glutamine 116 is a Mo-molybdopterin binding site. Residues cysteine 117, cysteine 120, cysteine 152, and cysteine 154 each coordinate [2Fe-2S] cluster. Cysteine 154 is a binding site for Mo-molybdopterin. The 187-residue stretch at 237–423 (FQGKRTTWII…LSIFIPYTAQ (187 aa)) folds into the FAD-binding PCMH-type domain. FAD is bound by residues 265 to 272 (LVMGNTTV), alanine 346, threonine 355, histidine 359, aspartate 368, and isoleucine 413. Residues 804–805 (AF), leucine 1045, 1086–1089 (GSMG), glutamine 1201, and leucine 1265 each bind Mo-molybdopterin. Glutamate 1267 (proton acceptor; for azaheterocycle hydroxylase activity) is an active-site residue.

The protein belongs to the xanthine dehydrogenase family. Homodimer. [2Fe-2S] cluster is required as a cofactor. Requires FAD as cofactor. The cofactor is Mo-molybdopterin. In terms of tissue distribution, highly expressed in Harderian glands and sebaceous glands with detectable levels in the epidermis and other keratinized epithelia (at protein level). Detected in testis. The expression is 3 times greater in females than in males.

The protein localises to the cytoplasm. The catalysed reaction is an aldehyde + O2 + H2O = a carboxylate + H2O2 + H(+). It catalyses the reaction retinal + O2 + H2O = retinoate + H2O2 + H(+). The enzyme catalyses all-trans-retinal + O2 + H2O = all-trans-retinoate + H2O2 + H(+). Aldehyde oxidase able to catalyze the oxidation of retinaldehyde into retinoate. Is responsible for the major all-trans-retinaldehyde-metabolizing activity in the Harderian gland, and contributes a significant amount of the same activity in the skin. Is devoid of pyridoxal-oxidizing activity, in contrast to the other aldehyde oxidases. Acts as a negative modulator of the epidermal trophism. May be able to oxidize a wide variety of aldehydes into their corresponding carboxylates and to hydroxylate azaheterocycles. In Mus musculus (Mouse), this protein is Aldehyde oxidase 4 (Aox4).